The following is a 290-amino-acid chain: Putative phosphoenolpyruvate synthase regulatory protein (290 aa).

170–177 serves as a coordination point for ADP; sequence GVSRCGKT.

Belongs to the pyruvate, phosphate/water dikinase regulatory protein family. PSRP subfamily.

It carries out the reaction [pyruvate, water dikinase] + ADP = [pyruvate, water dikinase]-phosphate + AMP + H(+). The catalysed reaction is [pyruvate, water dikinase]-phosphate + phosphate + H(+) = [pyruvate, water dikinase] + diphosphate. Functionally, bifunctional serine/threonine kinase and phosphorylase involved in the regulation of the phosphoenolpyruvate synthase (PEPS) by catalyzing its phosphorylation/dephosphorylation. The chain is Putative phosphoenolpyruvate synthase regulatory protein (ydiA) from Enterobacter agglomerans (Erwinia herbicola).